A 281-amino-acid polypeptide reads, in one-letter code: Splicing regulator RBM11 (281 aa).

Residues 10–87 (RTVFVGNLEA…RPINVQYRFG (78 aa)) enclose the RRM domain. Positions 184-281 (PSSYKWTHQQ…FRKSKKKKRY (98 aa)) are disordered. Polar residues-rich tracts occupy residues 187–217 (YKWT…SSLN) and 229–242 (YKWT…SDLY). The short motif at 245–280 (NKRKRQKQTSDSDSSTDNNRGNECSQKFRKSKKKKR) is the Bipartite nuclear localization signal element. Positions 271 to 281 (KFRKSKKKKRY) are enriched in basic residues.

As to quaternary structure, homodimer. In terms of tissue distribution, expressed in brain, hippocampus, prefrontal cortex, cerebellum, spinal cord, testis, mammary gland, spleen and kidney. Also expressed in fetal brain.

The protein localises to the nucleus. Its subcellular location is the nucleoplasm. It is found in the nucleus speckle. Tissue-specific splicing factor with potential implication in the regulation of alternative splicing during neuron and germ cell differentiation. Antagonizes SRSF1-mediated BCL-X splicing. May affect the choice of alternative 5' splice sites by binding to specific sequences in exons and antagonizing the SR protein SRSF1. The polypeptide is Splicing regulator RBM11 (Homo sapiens (Human)).